The chain runs to 82 residues: Large ribosomal subunit protein bL31B (82 aa).

The protein belongs to the bacterial ribosomal protein bL31 family. Type B subfamily. In terms of assembly, part of the 50S ribosomal subunit.

The protein is Large ribosomal subunit protein bL31B of Amoebophilus asiaticus (strain 5a2).